A 172-amino-acid chain; its full sequence is Small ribosomal subunit protein uS5 (172 aa).

The S5 DRBM domain maps to 17 to 80 (MREKMIAVNR…EECRRNLVKV (64 aa)).

It belongs to the universal ribosomal protein uS5 family. Part of the 30S ribosomal subunit. Contacts proteins S4 and S8.

In terms of biological role, with S4 and S12 plays an important role in translational accuracy. Located at the back of the 30S subunit body where it stabilizes the conformation of the head with respect to the body. The protein is Small ribosomal subunit protein uS5 of Paracidovorax citrulli (strain AAC00-1) (Acidovorax citrulli).